The primary structure comprises 507 residues: Fumarate hydratase, mitochondrial (507 aa).

A mitochondrion-targeting transit peptide spans 1-41 (MNRAFCLLARSRRFPRVPSAGAVLSGEAATLPRCAPNVVRM). An N6-acetyllysine; alternate mark is found at Lys58, Lys63, and Lys77. Lys58, Lys63, and Lys77 each carry N6-succinyllysine; alternate. A Phosphothreonine modification is found at Thr82. Lys91 is subject to N6-acetyllysine. 2 positions are modified to N6-acetyllysine; alternate: Lys112 and Lys119. 2 positions are modified to N6-succinyllysine; alternate: Lys112 and Lys119. Residues 142–144 (SGT), 173–176 (HPND), and 183–185 (SSN) contribute to the substrate site. The residue at position 210 (Lys210) is an N6-acetyllysine. N6-acetyllysine; alternate is present on Lys220. Residue Lys220 is modified to N6-succinyllysine; alternate. Thr231 serves as a coordination point for substrate. Catalysis depends on His232, which acts as the Proton donor/acceptor. Phosphothreonine is present on Thr233. Lys289 carries the N6-acetyllysine; alternate modification. Residue Lys289 is modified to N6-succinyllysine; alternate. Residue Ser362 is part of the active site. Substrate-binding positions include Ser363 and 368–370 (KVN). Ser363 is modified (phosphoserine). Residues Lys464 and Lys470 each carry the N6-succinyllysine modification. Position 499 is an N6-acetyllysine (Lys499).

Belongs to the class-II fumarase/aspartase family. Fumarase subfamily. In terms of assembly, homotetramer. Interacts with H2AZ1. Phosphorylation at Thr-233 by PRKDC in response to DNA damage promotes translocation to the nucleus and recruitment to DNA double-strand breaks (DSBs).

The protein localises to the mitochondrion. It is found in the cytoplasm. The protein resides in the cytosol. Its subcellular location is the nucleus. It localises to the chromosome. The catalysed reaction is (S)-malate = fumarate + H2O. The protein operates within carbohydrate metabolism; tricarboxylic acid cycle; (S)-malate from fumarate: step 1/1. Catalyzes the reversible stereospecific interconversion of fumarate to L-malate. Experiments in other species have demonstrated that specific isoforms of this protein act in defined pathways and favor one direction over the other. In terms of biological role, catalyzes the hydration of fumarate to L-malate in the tricarboxylic acid (TCA) cycle to facilitate a transition step in the production of energy in the form of NADH. Functionally, catalyzes the dehydration of L-malate to fumarate. Fumarate metabolism in the cytosol plays a role during urea cycle and arginine metabolism; fumarate being a by-product of the urea cycle and amino-acid catabolism. Also plays a role in DNA repair by promoting non-homologous end-joining (NHEJ). In response to DNA damage and phosphorylation by PRKDC, translocates to the nucleus and accumulates at DNA double-strand breaks (DSBs): acts by catalyzing formation of fumarate, an inhibitor of KDM2B histone demethylase activity, resulting in enhanced dimethylation of histone H3 'Lys-36' (H3K36me2). This is Fumarate hydratase, mitochondrial from Rattus norvegicus (Rat).